We begin with the raw amino-acid sequence, 103 residues long: Small ribosomal subunit protein uS10 (103 aa).

This sequence belongs to the universal ribosomal protein uS10 family. Part of the 30S ribosomal subunit.

Its function is as follows. Involved in the binding of tRNA to the ribosomes. The polypeptide is Small ribosomal subunit protein uS10 (Idiomarina loihiensis (strain ATCC BAA-735 / DSM 15497 / L2-TR)).